Reading from the N-terminus, the 545-residue chain is High-affinity glucose transporter 1 (545 aa).

A run of 9 helical transmembrane segments spans residues 29–49 (VFFI…DISS), 72–92 (GFIT…SSFV), 100–120 (LSLL…SSVQ), 125–145 (LIIG…VAPV), 157–177 (GLIG…MFYL), 192–212 (IAWG…FFIP), 291–311 (LTGM…AGYS), 317–337 (VASS…LYFI), and 345–365 (LLIG…GILG). Asn376 and Asn387 each carry an N-linked (GlcNAc...) asparagine glycan. Helical transmembrane passes span 395–415 (IACC…GIWV) and 433–453 (ISTS…PTGF). Asn455 carries an N-linked (GlcNAc...) asparagine glycan. A helical transmembrane segment spans residues 460 to 480 (TYIIYGVFCFAMATHVYFGFP). Residues 524 to 545 (VEHEEDKLMNEDSNSESRENQA) form a disordered region.

Belongs to the major facilitator superfamily. Sugar transporter (TC 2.A.1.1) family. As to quaternary structure, interacts with the human complement factors FH and C4BP. Also binds human immunodeficiency virus (HIV) protein gp160.

Its subcellular location is the cell membrane. Functionally, high-affinity glucose transporter. Acts as a multifunctional complement-evasion molecule that causes down-regulation of complement activation by acquisition of human complement factors FH and C4BP. Also functions as a human immunodeficiency virus (HIV) receptor via binding the viral gp160 protein. Modulates hyphae formation. The protein is High-affinity glucose transporter 1 of Candida albicans (strain SC5314 / ATCC MYA-2876) (Yeast).